We begin with the raw amino-acid sequence, 134 residues long: D-ribose pyranase (134 aa).

H20 (proton donor) is an active-site residue. Residues D28, H101, and 123–125 contribute to the substrate site; that span reads YCN.

Belongs to the RbsD / FucU family. RbsD subfamily. As to quaternary structure, homodecamer.

Its subcellular location is the cytoplasm. The catalysed reaction is beta-D-ribopyranose = beta-D-ribofuranose. It functions in the pathway carbohydrate metabolism; D-ribose degradation; D-ribose 5-phosphate from beta-D-ribopyranose: step 1/2. Its function is as follows. Catalyzes the interconversion of beta-pyran and beta-furan forms of D-ribose. This chain is D-ribose pyranase, found in Pseudomonas fluorescens (strain SBW25).